Here is a 138-residue protein sequence, read N- to C-terminus: Large-conductance mechanosensitive channel (138 aa).

The next 3 membrane-spanning stretches (helical) occupy residues valine 19–isoleucine 39, methionine 40–alanine 60, and glycine 81–isoleucine 101.

This sequence belongs to the MscL family. In terms of assembly, homopentamer.

The protein localises to the cell inner membrane. Functionally, channel that opens in response to stretch forces in the membrane lipid bilayer. May participate in the regulation of osmotic pressure changes within the cell. The polypeptide is Large-conductance mechanosensitive channel (Bradyrhizobium sp. (strain ORS 278)).